The following is a 38-amino-acid chain: Large ribosomal subunit protein bL36 (38 aa).

The protein belongs to the bacterial ribosomal protein bL36 family.

The chain is Large ribosomal subunit protein bL36 from Pseudothermotoga lettingae (strain ATCC BAA-301 / DSM 14385 / NBRC 107922 / TMO) (Thermotoga lettingae).